A 261-amino-acid polypeptide reads, in one-letter code: uncharacterized protein (261 aa).

Residue 22-46 (IVTGGNSGLGQAFAMALAKAGANIF) participates in NADP(+) binding. Ser153 is a substrate binding site. The active-site Proton acceptor is Tyr166.

The protein belongs to the short-chain dehydrogenases/reductases (SDR) family.

This is an uncharacterized protein from Escherichia coli (strain K12).